The primary structure comprises 447 residues: D-ribitol-5-phosphate cytidylyltransferase (447 aa).

This sequence belongs to the IspD/TarI cytidylyltransferase family. IspD subfamily. Homodimer.

The protein resides in the cytoplasm. Its subcellular location is the cytosol. It carries out the reaction D-ribitol 5-phosphate + CTP + H(+) = CDP-L-ribitol + diphosphate. The catalysed reaction is D-ribose 5-phosphate + CTP + H(+) = CDP-D-ribose + diphosphate. It catalyses the reaction D-ribulose 5-phosphate + CTP + H(+) = CDP-D-ribulose + diphosphate. It participates in protein modification; protein glycosylation. Functionally, cytidylyltransferase required for protein O-linked mannosylation. Catalyzes the formation of CDP-ribitol nucleotide sugar from D-ribitol 5-phosphate. CDP-ribitol is a substrate of FKTN during the biosynthesis of the phosphorylated O-mannosyl trisaccharide (N-acetylgalactosamine-beta-3-N-acetylglucosamine-beta-4-(phosphate-6-)mannose), a carbohydrate structure present in alpha-dystroglycan (DAG1), which is required for binding laminin G-like domain-containing extracellular proteins with high affinity. Shows activity toward other pentose phosphate sugars and mediates formation of CDP-ribulose or CDP-ribose using CTP and ribulose-5-phosphate or ribose-5-phosphate, respectively. Not involved in dolichol production. The chain is D-ribitol-5-phosphate cytidylyltransferase (Crppa) from Rattus norvegicus (Rat).